Consider the following 185-residue polypeptide: CD160 antigen (185 aa).

An N-terminal signal peptide occupies residues 1-27; sequence MQRILMAPGQSCCALAILLAIVNFQHG. An Ig-like V-type domain is found at 28 to 136; sequence GCIHVTSSAS…HGHFLSVLVT (109 aa). 2 disulfide bridges follow: cysteine 47-cysteine 115 and cysteine 64-cysteine 71. 2 N-linked (GlcNAc...) asparagine glycosylation sites follow: asparagine 138 and asparagine 156. Serine 160 is lipidated: GPI-anchor amidated serine. Positions 161-185 are cleaved as a propeptide — removed in mature form; sequence SGFLQVKAWGMLVTSLVALQALYTL.

As to quaternary structure, homomultimer; disulfide-linked. Interacts with classical and non-classical MHC class I molecules. Interacts with TNFRSF14 (via cysteine-rich domain 1); this interaction is direct. Interacts with LCK and CD247/CD3 zeta chain. Expressed in resting and activated NK cell subsets (at protein level). Expressed in resting NKT cells (at protein level). Expressed in activated CD8+ T cells (at protein level). Highly expressed in intraepithelial lymphocyte (IEL) subsets, particularly in innate-like CD8A-positive IELs (at protein level).

The protein resides in the cell membrane. The protein localises to the secreted. Functionally, receptor on immune cells capable to deliver stimulatory or inhibitory signals that regulate cell activation and differentiation. Exists as a GPI-anchored and as a transmembrane form, each likely initiating distinct signaling pathways via phosphoinositol 3-kinase in activated NK cells and via LCK and CD247/CD3 zeta chain in activated T cells. Receptor for both classical and non-classical MHC class I molecules. Receptor or ligand for TNF superfamily member TNFRSF14, participating in bidirectional cell-cell contact signaling between antigen presenting cells and lymphocytes. Upon ligation of TNFRSF14, provides stimulatory signal to NK cells enhancing IFNG production and anti-tumor immune response. On activated CD4+ T cells, interacts with TNFRSF14 and down-regulates CD28 costimulatory signaling, restricting memory and alloantigen-specific immune response. In the context of bacterial infection, acts as a ligand for TNFRSF14 on epithelial cells, triggering the production of antimicrobial proteins and pro-inflammatory cytokines. In terms of biological role, the soluble GPI-cleaved form, usually released by activated lymphocytes, might play an immune regulatory role by limiting lymphocyte effector functions. The sequence is that of CD160 antigen from Mus musculus (Mouse).